We begin with the raw amino-acid sequence, 87 residues long: Phosphoribosyl-ATP pyrophosphatase (87 aa).

The protein belongs to the PRA-PH family.

The protein localises to the cytoplasm. It catalyses the reaction 1-(5-phospho-beta-D-ribosyl)-ATP + H2O = 1-(5-phospho-beta-D-ribosyl)-5'-AMP + diphosphate + H(+). It functions in the pathway amino-acid biosynthesis; L-histidine biosynthesis; L-histidine from 5-phospho-alpha-D-ribose 1-diphosphate: step 2/9. This chain is Phosphoribosyl-ATP pyrophosphatase, found in Leifsonia xyli subsp. xyli (strain CTCB07).